A 251-amino-acid polypeptide reads, in one-letter code: MPGKIRPLIAGNWKMNGLKASLGELAAIGKGAGEVWRRVDLLICPPATLIFPAAAAMIGSKVAIGGQDCHAEASGANTGDISAEMLADAGATYVIVGHSERRTDHGETDAVVRAKAEAAWRAGLVAIVCVGETRAERDAGRAAEVVGRQLDGSVPDGARAANLVVAYEPVWAIGTGLTPTSQDIEEIHAVIRQNLTGRFKAEGEGVRLLYGGSLKPANAAEILALANVNGGLIGGASLKAADFLAIAEACP.

Substrate is bound at residue 12-14 (NWK). The Electrophile role is filled by His98. Glu168 (proton acceptor) is an active-site residue. Substrate contacts are provided by residues Gly174, Ser213, and 234-235 (GG).

It belongs to the triosephosphate isomerase family. In terms of assembly, homodimer.

Its subcellular location is the cytoplasm. It catalyses the reaction D-glyceraldehyde 3-phosphate = dihydroxyacetone phosphate. The protein operates within carbohydrate biosynthesis; gluconeogenesis. Its pathway is carbohydrate degradation; glycolysis; D-glyceraldehyde 3-phosphate from glycerone phosphate: step 1/1. Functionally, involved in the gluconeogenesis. Catalyzes stereospecifically the conversion of dihydroxyacetone phosphate (DHAP) to D-glyceraldehyde-3-phosphate (G3P). The sequence is that of Triosephosphate isomerase from Afipia carboxidovorans (strain ATCC 49405 / DSM 1227 / KCTC 32145 / OM5) (Oligotropha carboxidovorans).